Here is a 190-residue protein sequence, read N- to C-terminus: Peptidyl-tRNA hydrolase (190 aa).

Tyrosine 14 contacts tRNA. The active-site Proton acceptor is histidine 19. TRNA contacts are provided by tyrosine 64, asparagine 66, and asparagine 112.

The protein belongs to the PTH family. In terms of assembly, monomer.

The protein localises to the cytoplasm. The catalysed reaction is an N-acyl-L-alpha-aminoacyl-tRNA + H2O = an N-acyl-L-amino acid + a tRNA + H(+). Functionally, hydrolyzes ribosome-free peptidyl-tRNAs (with 1 or more amino acids incorporated), which drop off the ribosome during protein synthesis, or as a result of ribosome stalling. Its function is as follows. Catalyzes the release of premature peptidyl moieties from peptidyl-tRNA molecules trapped in stalled 50S ribosomal subunits, and thus maintains levels of free tRNAs and 50S ribosomes. This chain is Peptidyl-tRNA hydrolase, found in Chlorobium phaeobacteroides (strain DSM 266 / SMG 266 / 2430).